The following is a 439-amino-acid chain: 5-methylthioadenosine/S-adenosylhomocysteine deaminase (439 aa).

Residues His70 and His72 each contribute to the Zn(2+) site. Positions 99 and 192 each coordinate substrate. Residue His219 participates in Zn(2+) binding. 2 residues coordinate substrate: Glu222 and Asp307. Asp307 contacts Zn(2+).

This sequence belongs to the metallo-dependent hydrolases superfamily. MTA/SAH deaminase family. Requires Zn(2+) as cofactor.

The enzyme catalyses S-adenosyl-L-homocysteine + H2O + H(+) = S-inosyl-L-homocysteine + NH4(+). It carries out the reaction S-methyl-5'-thioadenosine + H2O + H(+) = S-methyl-5'-thioinosine + NH4(+). In terms of biological role, catalyzes the deamination of 5-methylthioadenosine and S-adenosyl-L-homocysteine into 5-methylthioinosine and S-inosyl-L-homocysteine, respectively. Is also able to deaminate adenosine. This Thermodesulfovibrio yellowstonii (strain ATCC 51303 / DSM 11347 / YP87) protein is 5-methylthioadenosine/S-adenosylhomocysteine deaminase.